A 691-amino-acid chain; its full sequence is MSRTTPLKRVRNIGIAAHIDAGKTTTSERILFFTGMSHKIGEVHDGAATMDWMEQEKERGITITSAATTCFWKNHQINLIDTPGHVDFTIEVERSMRVLDGAVAVFCSVGGVQPQSETVWRQANKYGVPRIVFVNKMDRIGANFFNVEEQIKNRLKGNPVPLQIPIGAEDNFKGVIDLITMKALVWEDESKPTDYVEKEIPAELKEKAEEYRVKMIEAVSETSDELMEKYLGGEELTQDEIKAGIKAGCLSLSMVPMLCGTAFKNKGVQPLLDAVVAYLPAPDEVANIKGEYEDGTEVSVKSTDDGEFAALAFKIMTDPFVGQLTFVRVYRGSLESGSYAYNSTKDKKERIGRLLKMHSNKREEIKTLYAGEIGAVVGLKDTLTGDTLASEKDKVILERMDFPDPVISVAVEPKTKADQEKMSIALNKLAQEDPSFRVSTDEESGQTIISGMGELHLEIIVDRMLREFKVEAEVGQPQVAYRETIRKTVEQEYKYAKQSGGRGQYGHVFLRLEPLEPGSGYEFVNDIKGGVIPKEYIPAVDKGVQEALQNGVLAGYPVEDVKVTVYDGSYHEVDSSEMAFKLAASMGFKEGARKAGAVILEPMMKVEVETPEEYMGDVIGDLNKRRGQVNSMDERGGNKIITAFCPLAEMFGYSTDLRSQTQGRATYSMEFDHYDEVPKNVSEEIIKKRNG.

Residues 8–283 (KRVRNIGIAA…AVVAYLPAPD (276 aa)) enclose the tr-type G domain. Residues 17-24 (AHIDAGKT), 81-85 (DTPGH), and 135-138 (NKMD) each bind GTP.

Belongs to the TRAFAC class translation factor GTPase superfamily. Classic translation factor GTPase family. EF-G/EF-2 subfamily.

It is found in the cytoplasm. Functionally, catalyzes the GTP-dependent ribosomal translocation step during translation elongation. During this step, the ribosome changes from the pre-translocational (PRE) to the post-translocational (POST) state as the newly formed A-site-bound peptidyl-tRNA and P-site-bound deacylated tRNA move to the P and E sites, respectively. Catalyzes the coordinated movement of the two tRNA molecules, the mRNA and conformational changes in the ribosome. This chain is Elongation factor G, found in Campylobacter lari (strain RM2100 / D67 / ATCC BAA-1060).